The chain runs to 391 residues: Na(+)/H(+) antiporter NhaA (391 aa).

The next 11 helical transmembrane spans lie at 14 to 34, 47 to 67, 87 to 107, 117 to 137, 146 to 166, 171 to 191, 205 to 225, 252 to 272, 280 to 300, 318 to 338, and 356 to 376; these read AGGI…NSPL, FGMS…FLLI, IFPA…YVAF, GWAI…ALLG, VFLL…IALF, LSTM…MLNA, AILW…GVVI, VAFG…LEGV, MLPL…IFTF, FIHI…SIFI, and LGIL…LHFS.

Belongs to the NhaA Na(+)/H(+) (TC 2.A.33) antiporter family.

Its subcellular location is the cell inner membrane. It carries out the reaction Na(+)(in) + 2 H(+)(out) = Na(+)(out) + 2 H(+)(in). Functionally, na(+)/H(+) antiporter that extrudes sodium in exchange for external protons. The sequence is that of Na(+)/H(+) antiporter NhaA from Vibrio campbellii (strain ATCC BAA-1116).